The following is a 425-amino-acid chain: Glutamyl-tRNA(Gln) amidotransferase subunit D (425 aa).

A disordered region spans residues 53–84 (ENNGEAANGGNGGKNGQKEPEPAKEKVSKPGL). A compositionally biased stretch (basic and acidic residues) spans 68–80 (GQKEPEPAKEKVS). One can recognise an Asparaginase/glutaminase domain in the interval 85–414 (PKVSILSTGG…EKAVSMLGEN (330 aa)). Active-site residues include Thr-95, Thr-171, Asp-172, and Lys-248.

Belongs to the asparaginase 1 family. GatD subfamily. Heterodimer of GatD and GatE.

It catalyses the reaction L-glutamyl-tRNA(Gln) + L-glutamine + ATP + H2O = L-glutaminyl-tRNA(Gln) + L-glutamate + ADP + phosphate + H(+). Functionally, allows the formation of correctly charged Gln-tRNA(Gln) through the transamidation of misacylated Glu-tRNA(Gln) in organisms which lack glutaminyl-tRNA synthetase. The reaction takes place in the presence of glutamine and ATP through an activated gamma-phospho-Glu-tRNA(Gln). The GatDE system is specific for glutamate and does not act on aspartate. The sequence is that of Glutamyl-tRNA(Gln) amidotransferase subunit D from Methanosarcina mazei (strain ATCC BAA-159 / DSM 3647 / Goe1 / Go1 / JCM 11833 / OCM 88) (Methanosarcina frisia).